The sequence spans 1034 residues: Enteropeptidase (1034 aa).

The propeptide occupies 1-51 (MGSKRIIPSRHRSLSTYEVMFTALFAILMVLCAGLIAVSWLTIKGSEKDAA). Residues 2–18 (GSKRIIPSRHRSLSTYE) lie on the Cytoplasmic side of the membrane. A helical; Signal-anchor for type II membrane protein membrane pass occupies residues 19–47 (VMFTALFAILMVLCAGLIAVSWLTIKGSE). The Extracellular portion of the chain corresponds to 48–1034 (KDAALGKSHE…FTEWIQSFLH (987 aa)). Residues 54–169 (KSHEARGTMK…NSIDITESLE (116 aa)) enclose the SEA domain. Residues Asn-116, Asn-147, Asn-170, and Asn-194 are each glycosylated (N-linked (GlcNAc...) asparagine). The region spanning 197–238 (IECLPGSRPCADALKCIAVDLFCDGELNCPDGSDEDSKICAT) is the LDL-receptor class A 1 domain. Cystine bridges form between Cys-199–Cys-212, Cys-206–Cys-225, Cys-219–Cys-236, and Cys-240–Cys-268. One can recognise a CUB 1 domain in the interval 240-349 (CDGKFLLTES…IGFNATYTAF (110 aa)). N-linked (GlcNAc...) asparagine glycosylation is found at Asn-283, Asn-343, Asn-350, Asn-403, Asn-455, Asn-485, Asn-518, Asn-549, and Asn-645. Residues 357–519 (DEKINCNFED…ISLTYGICNV (163 aa)) form the MAM domain. A disulfide bond links Cys-539 and Cys-567. One can recognise a CUB 2 domain in the interval 539 to 649 (CGGPFELWEP…GGFKANFTTG (111 aa)). The LDL-receptor class A 2 domain maps to 656–694 (EPCKEDNFQCENGECVLLVNLCDGFSHCKDGSDEAHCVR). Intrachain disulfides connect Cys-658/Cys-670, Cys-665/Cys-683, and Cys-677/Cys-692. An SRCR domain is found at 693 to 786 (VRFLNGTANN…LILLQCNHKS (94 aa)). Residues Asn-697, Asn-701, Asn-721, Asn-740, and Asn-761 are each glycosylated (N-linked (GlcNAc...) asparagine). 6 cysteine pairs are disulfide-bonded: Cys-772-Cys-782, Cys-787-Cys-911, Cys-825-Cys-841, Cys-925-Cys-992, Cys-956-Cys-971, and Cys-982-Cys-1010. The region spanning 800–1034 (IVGGNDSREG…FTEWIQSFLH (235 aa)) is the Peptidase S1 domain. The N-linked (GlcNAc...) asparagine glycan is linked to Asn-804. The active-site Charge relay system is His-840. Asn-863 carries N-linked (GlcNAc...) asparagine glycosylation. Asp-891 acts as the Charge relay system in catalysis. 2 N-linked (GlcNAc...) asparagine glycosylation sites follow: Asn-902 and Asn-964. The Charge relay system role is filled by Ser-986.

It belongs to the peptidase S1 family. As to quaternary structure, heterotrimer of a catalytic (light) chain, a multidomain (heavy) chain, and a mini chain. Post-translationally, the chains are derived from a single precursor that is cleaved by a trypsin-like protease. The mini chain may be cleaved by elastase.

The protein resides in the membrane. It catalyses the reaction Activation of trypsinogen by selective cleavage of 6-Lys-|-Ile-7 bond.. Functionally, responsible for initiating activation of pancreatic proteolytic proenzymes (trypsin, chymotrypsin and carboxypeptidase A). It catalyzes the conversion of trypsinogen to trypsin which in turn activates other proenzymes including chymotrypsinogen, procarboxypeptidases, and proelastases. In Sus scrofa (Pig), this protein is Enteropeptidase (TMPRSS15).